A 452-amino-acid chain; its full sequence is Scaffold protein ILK (452 aa).

5 ANK repeats span residues 2 to 30 (DDIF…LNQG), 31 to 63 (DDHG…INVM), 64 to 96 (NRGD…INAV), 97 to 129 (NEHG…VSIA), and 130 to 174 (NKYS…GTTR). The Protein kinase domain maps to 193 to 446 (LSLSQKLNEN…PKFDMIVPIL (254 aa)). Positions 200, 202, 204, 270, 272, and 279 each coordinate ATP. Residue aspartate 339 participates in Mg(2+) binding. Lysine 341 is a binding site for ATP. Positions 363–371 (KKPEEINRR) match the Nuclear localization signal motif.

The protein belongs to the protein kinase superfamily. TKL Ser/Thr protein kinase family. Interacts with PXN/PAXILLIN (via LD motif 4).

It localises to the cell junction. It is found in the focal adhesion. The protein localises to the cell membrane. Its subcellular location is the cell projection. The protein resides in the lamellipodium. It localises to the cytoplasm. It is found in the myofibril. The protein localises to the sarcomere. Its subcellular location is the nucleus. The protein resides in the cytoskeleton. It localises to the microtubule organizing center. It is found in the centrosome. The protein localises to the cell cortex. Scaffold protein which mediates protein-protein interactions during a range of cellular events including focal adhesion assembly, cell adhesion and cell migration. The protein is Scaffold protein ILK of Gallus gallus (Chicken).